The primary structure comprises 559 residues: Sesquiterpene synthase (559 aa).

Residues aspartate 312, aspartate 316, and glutamate 464 each contribute to the Mg(2+) site. The DDXXD motif motif lies at 312–316; the sequence is DDIYD.

Belongs to the terpene synthase family. Tpsa subfamily. Mg(2+) is required as a cofactor. Requires Mn(2+) as cofactor.

Its function is as follows. Catalyzes alpha-humulene and delta-cadinene, as well as beta-elemene, the thermal rearrangement product of germacrene A and several other bicyclic sesquiterpenes when incubated with (2E,6E)-farnesyl diphosphate. The sequence is that of Sesquiterpene synthase from Santalum austrocaledonicum (Sandalwood).